The sequence spans 169 residues: Ribosome maturation factor RimM (169 aa).

The PRC barrel domain occupies 95–168 (EGNYYIFQIV…KMKVELLEGL (74 aa)).

The protein belongs to the RimM family. In terms of assembly, binds ribosomal protein uS19.

It localises to the cytoplasm. In terms of biological role, an accessory protein needed during the final step in the assembly of 30S ribosomal subunit, possibly for assembly of the head region. Essential for efficient processing of 16S rRNA. May be needed both before and after RbfA during the maturation of 16S rRNA. It has affinity for free ribosomal 30S subunits but not for 70S ribosomes. This is Ribosome maturation factor RimM from Desulforamulus reducens (strain ATCC BAA-1160 / DSM 100696 / MI-1) (Desulfotomaculum reducens).